A 76-amino-acid chain; its full sequence is Small ribosomal subunit protein bS21A (76 aa).

Positions 35-52 (HYEKPSEKRAREKAEAVR) are enriched in basic and acidic residues. Residues 35–76 (HYEKPSEKRAREKAEAVRRARKLARKRAQREGLVSGRPAAAR) form a disordered region. Residues 53–62 (RARKLARKRA) are compositionally biased toward basic residues.

This sequence belongs to the bacterial ribosomal protein bS21 family.

The chain is Small ribosomal subunit protein bS21A from Chelativorans sp. (strain BNC1).